We begin with the raw amino-acid sequence, 1422 residues long: Guanine nucleotide exchange factor subunit RIC1 (1422 aa).

WD repeat units lie at residues 64 to 103 and 304 to 343; these read TQFG…GDKY and NKTG…LICT. Disordered stretches follow at residues 442–462 and 986–1005; these read NPKY…SPFA and SGES…SSSG. Residues 449–460 are compositionally biased toward basic and acidic residues; it reads RAERMPRHEKSP. Phosphothreonine occurs at positions 991 and 995. Phosphoserine occurs at positions 1014, 1016, 1018, 1036, and 1171. A disordered region spans residues 1021–1048; that stretch reads AENVPPGKFGLQKTLSMPTGPSGKRWSK. Disordered regions lie at residues 1179 to 1198 and 1355 to 1422; these read THRD…DAFL and DTFQ…CSVS. Residues 1378–1396 are compositionally biased toward polar residues; it reads GSCSHGSISQSEPGSNNVV. Positions 1403–1412 are enriched in acidic residues; it reads TTQADEEEPL.

This sequence belongs to the RIC1 family. As to quaternary structure, forms a complex with RGP1; the interaction enhances RAB6A GTPase activity. Interacts (via central domain) with RGP1. Interacts with RAB6A; the interaction is direct with a preference for RAB6A-GDP. Interacts (via C-terminus domain) with RAB33B; the interaction is direct with a preference for RAB33B-GTP. Interacts with GJA1. Expressed in the eye lens.

The protein localises to the cytoplasm. Its subcellular location is the cytosol. It localises to the membrane. In terms of biological role, the RIC1-RGP1 complex acts as a guanine nucleotide exchange factor (GEF), which activates RAB6A by exchanging bound GDP for free GTP, and may thereby be required for efficient fusion of endosome-derived vesicles with the Golgi compartment. The RIC1-RGP1 complex participates in the recycling of mannose-6-phosphate receptors. Required for phosphorylation and localization of GJA1. Is a regulator of procollagen transport and secretion, and is required for correct cartilage morphogenesis and development of the craniofacial skeleton. This is Guanine nucleotide exchange factor subunit RIC1 from Mus musculus (Mouse).